The sequence spans 230 residues: Sugar fermentation stimulation protein homolog (230 aa).

This sequence belongs to the SfsA family.

The protein is Sugar fermentation stimulation protein homolog of Thermoanaerobacter pseudethanolicus (strain ATCC 33223 / 39E) (Clostridium thermohydrosulfuricum).